Consider the following 1859-residue polypeptide: U3 small nucleolar RNA-associated protein 10 (1859 aa).

The helical transmembrane segment at 258–278 threads the bilayer; the sequence is LGAYSVLAVLSAVAPLSIELL. The stretch at 578–616 is one HEAT 1 repeat; the sequence is VLPLLLIAFNDPSSHIRAAFAQLVQLVSEITKAIHENKK. The chain crosses the membrane as a helical span at residues 1392-1412; it reads IVIASISAIVSIVNVLGIKTL. The HEAT 2 repeat unit spans residues 1819–1857; sequence LVPHIAELLEDDDEAVEIEVREGLVRVIEKVLGEPLDRY.

The protein belongs to the HEATR1/UTP10 family. Component of the ribosomal small subunit (SSU) processome.

It localises to the nucleus. The protein resides in the nucleolus. The protein localises to the membrane. In terms of biological role, involved in nucleolar processing of pre-18S ribosomal RNA. Involved in ribosome biosynthesis. This Lodderomyces elongisporus (strain ATCC 11503 / CBS 2605 / JCM 1781 / NBRC 1676 / NRRL YB-4239) (Yeast) protein is U3 small nucleolar RNA-associated protein 10.